The sequence spans 352 residues: Rhodopsin, deep-sea form (352 aa).

Topologically, residues 1–36 are extracellular; that stretch reads MNGTEGPNFYIPMSNITGVVRSPFEYPQYYLAEPWA. Residues N2 and N15 are each glycosylated (N-linked (GlcNAc...) asparagine). The helical transmembrane segment at 37–61 threads the bilayer; that stretch reads YTILAAYMFTLILLGFPVNFLTLYV. Residues 62–73 are Cytoplasmic-facing; the sequence is TIEHKKLRTPLN. A helical transmembrane segment spans residues 74–98; it reads YILLNLAVANLFMVFGGFTTTVYTS. Over 99–113 the chain is Extracellular; the sequence is MHGYFVFGETGCNLE. C110 and C187 are disulfide-bonded. A helical membrane pass occupies residues 114 to 133; sequence GYFATLGGEISLWSLVVLAI. Topologically, residues 134–152 are cytoplasmic; it reads ERWVVVCKPMSNFRFGENH. A helical membrane pass occupies residues 153–176; it reads AIMGLAFTWIMANSCAMPPLFGWS. The Extracellular portion of the chain corresponds to 177-202; the sequence is RYIPEGMQCSCGVDYYTLKPEVNNES. The N-linked (GlcNAc...) asparagine glycan is linked to N200. A helical membrane pass occupies residues 203 to 230; sequence FVIYMFIVHFSVPLTIISFCYGRLVCTV. Residues 231-252 are Cytoplasmic-facing; the sequence is KEAAAQQQESETTQRAEREVTR. Residues 253–276 traverse the membrane as a helical segment; sequence MVVIMVIAFLVCWVPYASVAWYIF. The Extracellular portion of the chain corresponds to 277–284; the sequence is THQGSTFG. A helical transmembrane segment spans residues 285 to 309; sequence PVFMTVPSFFAKSSAIYNPLIYICL. Position 296 is an N6-(retinylidene)lysine (K296). Over 310 to 352 the chain is Cytoplasmic; the sequence is NSQFRNCMITTLFCGKNPFQEEEGASTTASKTEASSVSSVSPA. C323 is lipidated: S-palmitoyl cysteine. Residues 333–352 are disordered; the sequence is GASTTASKTEASSVSSVSPA. The segment covering 334–352 has biased composition (low complexity); the sequence is ASTTASKTEASSVSSVSPA.

Belongs to the G-protein coupled receptor 1 family. Opsin subfamily. In terms of processing, phosphorylated on some or all of the serine and threonine residues present in the C-terminal region. Rod shaped photoreceptor cells which mediates vision in dim light.

The protein resides in the membrane. In terms of biological role, visual pigments such as rhodopsin and porphyropsin are light-absorbing molecules that mediate vision. Rhodopsin consists of an apoprotein, opsin, covalently linked to 11-cis-retinal. This receptor is coupled to the activation of phospholipase C. Porphyropsin consists of opsin covalently linked to 11-cis 3,4-didehydroretinal. In Anguilla anguilla (European freshwater eel), this protein is Rhodopsin, deep-sea form.